The following is a 3033-amino-acid chain: Genome polyprotein (3033 aa).

Serine 2 carries the post-translational modification N-acetylserine; by host. An interaction with STAT1 region spans residues 2–23; that stretch reads STNPKPQRKTKRNTNRRPQDVK. Residues 2-58 are interaction with EIF2AK2/PKR; that stretch reads STNPKPQRKTKRNTNRRPQDVKFPGGGQIVGGVYLLPRRGPRLGVRATRKTSERSQP. The segment at 2–59 is interaction with DDX3X; the sequence is STNPKPQRKTKRNTNRRPQDVKFPGGGQIVGGVYLLPRRGPRLGVRATRKTSERSQPR. The tract at residues 2-75 is disordered; it reads STNPKPQRKT…PKDRRSTGKS (74 aa). 2 consecutive short sequence motifs (nuclear localization signal) follow at residues 5 to 13 and 38 to 43; these read PKPQRKTKR and PRRGPR. Positions 7–16 are enriched in basic residues; it reads PQRKTKRNTN. Residues 32 to 47 show a composition bias toward low complexity; that stretch reads GGVYLLPRRGPRLGVR. Serine 53 carries the post-translational modification Phosphoserine; by host. 2 consecutive short sequence motifs (nuclear localization signal) follow at residues 58-64 and 66-71; these read PRGRRQP and PKDRRS. Phosphoserine; by host is present on residues serine 99 and serine 116. An important for endoplasmic reticulum and mitochondrial localization region spans residues 112–152; it reads PRHRSRNLGRVIDTITCGFADLMGYIPVVGAPVGGVARALA. The interval 122–173 is interaction with APOA2; sequence VIDTITCGFADLMGYIPVVGAPVGGVARALAHGVRVLEDGINYATRNLPGCS. The important for lipid droplets localization stretch occupies residues 164–167; the sequence is YATR. Positions 178–191 are cleaved as a propeptide — ER anchor for the core protein, removed in mature form by host signal peptidase; it reads LLALLSCVTVPVSS. Residues 190-358 lie on the Lumenal side of the membrane; sequence SSVEIRNIST…FGGHWGVVFG (169 aa). 2 N-linked (GlcNAc...) asparagine; by host glycosylation sites follow: asparagine 196 and asparagine 209. Positions 265-296 are important for fusion; it reads IVMAATVCSALYVGDVCGAVMIVSQALIVSPE. A glycan (N-linked (GlcNAc...) asparagine; by host) is linked at asparagine 305. Residues 359-379 traverse the membrane as a helical segment; the sequence is LAYFSMQGAWAKVIAILLLVA. Topologically, residues 380-729 are lumenal; it reads GVDATTYSTG…WEWVVLLFLL (350 aa). Residues 385–412 form an HVR1 region; it reads TYSTGATVGRTVGSFAGLFKLGAQQNVQ. N-linked (GlcNAc...) (high mannose) asparagine; by host glycans are attached at residues asparagine 417, asparagine 423, and asparagine 430. Intrachain disulfides connect cysteine 429-cysteine 554, cysteine 452-cysteine 459, cysteine 488-cysteine 496, and cysteine 505-cysteine 510. An N-linked (GlcNAc...) asparagine; by host glycan is attached at asparagine 448. Residues 475–480 form an HVR2 region; that stretch reads ETNVTN. An N-linked (GlcNAc...) asparagine; by host glycan is attached at asparagine 477. The interval 482–495 is CD81-binding 1; sequence EDMRPYCWHYPPKP. N-linked (GlcNAc...) asparagine; by host glycosylation occurs at asparagine 534. The tract at residues 546 to 553 is CD81-binding 2; it reads PPRGAWFG. N-linked (GlcNAc...) asparagine; by host glycosylation is present at asparagine 558. 4 disulfides stabilise this stretch: cysteine 566-cysteine 571, cysteine 585-cysteine 589, cysteine 601-cysteine 624, and cysteine 611-cysteine 648. N-linked (GlcNAc...) (high mannose) asparagine; by host glycans are attached at residues asparagine 627 and asparagine 649. Cysteine 656 and cysteine 681 form a disulfide bridge. Residues 664 to 675 are PKR/eIF2-alpha phosphorylation homology domain (PePHD); it reads GQQSPLLHSTTE. A helical transmembrane segment spans residues 730-750; the sequence is LADARICACLWMLIILGQAEA. At 751–761 the chain is on the lumenal side; that stretch reads ALEKLIILHSA. Residues 762–782 traverse the membrane as a helical segment; it reads SAASANGPLWFFIFFTAAWYL. Topologically, residues 783 to 786 are cytoplasmic; it reads KGRV. Residues 787 to 807 traverse the membrane as a helical segment; it reads VPAATYSVLGLWSFLLLVLAL. Topologically, residues 808–817 are lumenal; sequence PQQAYALDAA. The helical transmembrane segment at 818 to 838 threads the bilayer; the sequence is EQGELGLVILMIISIFTLTPA. Residues 839–885 lie on the Cytoplasmic side of the membrane; the sequence is YKILLSRSVWWLSYMLVLAEAQVQQWVPPLEARGGRDGIIWVAVILH. The helical transmembrane segment at 886–906 threads the bilayer; sequence PHLVFEVTKWLLAILGSAYLL. The Lumenal portion of the chain corresponds to 907 to 932; the sequence is KASLLRVPYFVRAHALLRVCTLVRHL. Positions 907–1030 constitute a Peptidase C18 domain; that stretch reads KASLLRVPYF…GYTSKGWKLL (124 aa). The tract at residues 908–1210 is protease NS2-3; sequence ASLLRVPYFV…PVESLDIARR (303 aa). A lipid anchor (S-palmitoyl cysteine; by host) is attached at cysteine 926. A helical membrane pass occupies residues 933-953; that stretch reads AGARYIQMLLITMGRWTGTYI. An interaction with host SCPS1 region spans residues 933-953; the sequence is AGARYIQMLLITMGRWTGTYI. The Cytoplasmic segment spans residues 954 to 1661; sequence YDHLSPLSTW…CMQADLEVMT (708 aa). Residues histidine 956, glutamate 976, and cysteine 997 each act as for protease NS2 activity; shared with dimeric partner in the active site. A Peptidase S29 domain is found at 1031-1212; it reads APITAYTQQT…ESLDIARRTP (182 aa). Active-site charge relay system; for serine protease NS3 activity residues include histidine 1087 and aspartate 1111. Residues cysteine 1127 and cysteine 1129 each contribute to the Zn(2+) site. Serine 1169 acts as the Charge relay system; for serine protease NS3 activity in catalysis. The Zn(2+) site is built by cysteine 1175 and histidine 1179. Residues 1221–1373 enclose the Helicase ATP-binding domain; that stretch reads PAVPQTYQVG…ANIEEVALGH (153 aa). 1234-1241 contributes to the ATP binding site; it reads APTGSGKS. Residues serine 1241 and glutamate 1321 each contribute to the Mg(2+) site. Positions 1320-1323 match the DECH box motif; the sequence is DECH. The tract at residues 1490–1502 is RNA-binding; the sequence is QRRGRTGRGRLGT. The chain crosses the membrane as a helical span at residues 1662–1682; that stretch reads STWVLAGGVLAAVAAYCLATG. The segment at 1683–1694 is NS3-binding; it reads CISIIGRIHLND. Topologically, residues 1683 to 1809 are cytoplasmic; that stretch reads CISIIGRIHL…ALTSPLPTST (127 aa). A helical membrane pass occupies residues 1810-1830; that stretch reads TILLNIMGGWLASQIAPPAGA. Over 1831-1832 the chain is Lumenal; sequence TG. The helical transmembrane segment at 1833–1853 threads the bilayer; that stretch reads FVVSGLVGAAVGSIGLGKILV. A topological domain (cytoplasmic) is located at residue aspartate 1854. Residues 1855 to 1875 traverse the membrane as a helical segment; the sequence is VLAGYGAGISGALVAFKIMSG. The Lumenal portion of the chain corresponds to 1876–1885; it reads EKPSVEDVVN. The chain crosses the membrane as a helical span at residues 1886 to 1906; sequence LLPAILSPGALVVGVICAAIL. Residues 1907–1976 lie on the Cytoplasmic side of the membrane; the sequence is RRHVGQGEGA…WITEDCPVPC (70 aa). Residue cysteine 1976 is the site of S-palmitoyl cysteine; by host attachment. The stretch at 1977–2007 is an intramembrane region; that stretch reads SGSWLRDIWEWVCSILTDFKNWLSAKLLPKM. Topologically, residues 2008-3012 are cytoplasmic; sequence PGLPFISCQK…FHSVSHARPR (1005 aa). The Zn(2+) site is built by cysteine 2015, cysteine 2033, cysteine 2035, and cysteine 2056. The tract at residues 2124–2212 is FKBP8-binding; that stretch reads EFFSWVDGVQ…ASSSASQLSA (89 aa). The interval 2124–2332 is transcriptional activation; sequence EFFSWVDGVQ…PVPPPRRRRA (209 aa). The segment at 2139 to 2143 is interaction with non-structural protein 4A; sequence PTPGP. Residues 2192-2213 form a disordered region; the sequence is RRLARGSPPSQASSSASQLSAP. The interval 2193 to 2460 is interaction with host SKP2; it reads RLARGSPPSQ…ALITPCGPEE (268 aa). 6 positions are modified to phosphoserine; by host: serine 2198, serine 2201, serine 2205, serine 2208, serine 2211, and serine 2214. Over residues 2198–2213 the composition is skewed to low complexity; the sequence is SPPSQASSSASQLSAP. The interval 2214 to 2249 is ISDR; the sequence is SLKATCTTHKTAYDCDMVDANLFMGGDVTRIESDSK. The tract at residues 2214 to 2275 is interaction with EIF2AK2/PKR; it reads SLKATCTTHK…REPSVPSEYL (62 aa). Residues 2249–2306 are NS4B-binding; that stretch reads KVIVLDSLDSMTEVEDDREPSVPSEYLTRRRKFPPALPPWARPDYNPPVIETWKRPDY. Residues 2299-2377 are V3; the sequence is ETWKRPDYEP…DTGGDSVQQP (79 aa). Residues 2322-2325 carry the SH3-binding motif; it reads APVP. Residues 2327 to 2335 carry the Nuclear localization signal motif; sequence PRRRRARVL. Lysine 2350 is covalently cross-linked (Glycyl lysine isopeptide (Lys-Gly) (interchain with G-Cter in ubiquitin)). A disordered region spans residues 2354-2431; it reads PLQDTNDSGH…IDSDSKSWST (78 aa). The segment covering 2355 to 2391 has biased composition (polar residues); that stretch reads LQDTNDSGHSTGADTGGDSVQQPSGETAASDAGSLSS. 2 positions are modified to phosphoserine; by host: serine 2471 and serine 2484. Residues 2656–2774 form the RdRp catalytic domain; that stretch reads PMGFSYDTRC…ISESQGNEED (119 aa). Mg(2+) is bound by residues aspartate 2662, aspartate 2760, and aspartate 2761. The helical transmembrane segment at 3013–3033 threads the bilayer; sequence LLLLCLLLLSVGVGIFLLPAR.

It belongs to the hepacivirus polyprotein family. Homooligomer. Interacts with E1 (via C-terminus). Interacts with the non-structural protein 5A. Interacts (via N-terminus) with host STAT1 (via SH2 domain); this interaction results in decreased STAT1 phosphorylation and ubiquitin-mediated proteasome-dependent STAT1 degradation, leading to decreased IFN-stimulated gene transcription. Interacts with host STAT3; this interaction constitutively activates STAT3. Interacts with host LTBR receptor. Interacts with host TNFRSF1A receptor and possibly induces apoptosis. Interacts with host HNRPK. Interacts with host YWHAE. Interacts with host UBE3A/E6AP. Interacts with host DDX3X. Interacts with host APOA2. Interacts with host RXRA protein. Interacts with host SP110 isoform 3/Sp110b; this interaction sequesters the transcriptional corepressor SP110 away from the nucleus. Interacts with host CREB3 nuclear transcription protein; this interaction triggers cell transformation. Interacts with host ACY3. Interacts with host C1QR1. Interacts with host RBM24; this interaction, which enhances the interaction of the mature core protein with 5'-UTR, may inhibit viral translation and favor replication. Interacts with host EIF2AK2/PKR; this interaction induces the autophosphorylation of EIF2AK2. Part of the viral assembly initiation complex composed of NS2, E1, E2, NS3, NS4A, NS5A and the mature core protein. In terms of assembly, forms a heterodimer with envelope glycoprotein E2. Interacts with mature core protein. Interacts with protease NS2. The heterodimer E1/E2 interacts with host CLDN1; this interaction plays a role in viral entry into host cell. Interacts with host SPSB2 (via C-terminus). Part of the viral assembly initiation complex composed of NS2, E1, E2, NS3, NS4A, NS5A and the mature core protein. Interacts with host NEURL3; this interaction prevents E1 binding to glycoprotein E2. As to quaternary structure, forms a heterodimer with envelope glycoprotein E1. Interacts with host CD81 and SCARB1 receptors; these interactions play a role in viral entry into host cell. Interacts with host EIF2AK2/PKR; this interaction inhibits EIF2AK2 and probably allows the virus to evade the innate immune response. Interacts with host CD209/DC-SIGN and CLEC4M/DC-SIGNR. Interact with host SPCS1; this interaction is essential for viral particle assembly. Interacts with protease NS2. The heterodimer E1/E2 interacts with host CLDN1; this interaction plays a role in viral entry into host cell. Part of the viral assembly initiation complex composed of NS2, E1, E2, NS3, NS4A, NS5A and the mature core protein. Interacts with host SLC3A2/4F2hc; the interaction may facilitate viral entry into host cell. Interacts with human PLSCR1. Homohexamer. Homoheptamer. Interacts with protease NS2. In terms of assembly, homodimer. Interacts with host SPCS1; this interaction is essential for viral particle assembly. Interacts with envelope glycoprotein E1. Interacts with envelope glycoprotein E2. Interacts with viroporin p7. Interacts with serine protease/helicase NS3. Part of the replication complex composed of NS2, NS3, NS4A, NS4B, NS5A and the RNA-directed RNA polymerase embedded in an ER-derived membranous web. Part of the viral assembly initiation complex composed of NS2, E1, E2, NS3, NS4A, NS5A and the mature core protein. As to quaternary structure, interacts with protease NS2. Interacts with non-structural protein 4A; this interaction stabilizes the folding of NS3 serine protease. NS3-NS4A interaction is essential for NS3 activation and allows membrane anchorage of the latter. NS3/NS4A complex also prevents phosphorylation of host IRF3, thus preventing the establishment of dsRNA induced antiviral state. Interacts with host MAVS; this interaction leads to the cleavage and inhibition of host MAVS. Interacts with host TICAM1; this interaction leads to the cleavage and inhibition of host TICAM1. Interacts with host TANK-binding kinase/TBK1; this interaction results in the inhibition of the association between TBK1 and IRF3, which leads to the inhibition of IRF3 activation. Interacts with host RBM24. Part of the replication complex composed of NS2, NS3, NS4A, NS4B, NS5A and the RNA-directed RNA polymerase embedded in an ER-derived membranous web. Part of the viral assembly initiation complex composed of NS2, E1, E2, NS3, NS4A, NS5A and the mature core protein. Interacts with NS3 serine protease; this interaction stabilizes the folding of NS3 serine protease. NS3-NS4A interaction is essential for NS3 activation and allows membrane anchorage of the latter. Interacts with non-structural protein 5A (via N-terminus). Part of the replication complex composed of NS2, NS3, NS4A, NS4B, NS5A and the RNA-directed RNA polymerase embedded in an ER-derived membranous web. Part of the viral assembly initiation complex composed of NS2, E1, E2, NS3, NS4A, NS5A and the mature core protein. In terms of assembly, homomultimer. Interacts with non-structural protein NS5A. Interacts with host PLA2G4C; this interaction likely initiates the recruitment of replication complexes to lipid droplets. Interacts with host STING; this interaction disrupts the interaction between STING and TBK1 thereby suppressing the interferon signaling. Part of the replication complex composed of NS2, NS3, NS4A, NS4B, NS5A and the RNA-directed RNA polymerase embedded in an ER-derived membranous web. As to quaternary structure, monomer. Homodimer; dimerization is required for RNA-binding. Interacts with the mature core protein. Interacts (via N-terminus) with non-structural protein 4A. Interacts with non-structural protein 4B. Interacts (via region D2) with RNA-directed RNA polymerase. Part of the viral assembly initiation complex composed of NS2, E1, E2, NS3, NS4A, NS5A and the mature core protein. Part of the replication complex composed of NS2, NS3, NS4A, NS4B, NS5A and the RNA-directed RNA polymerase embedded in an ER-derived membranous web. Interacts with host GRB2. Interacts with host BIN1. Interacts with host PIK3R1. Interacts with host SRCAP. Interacts with host FKBP8. Interacts (via C-terminus) with host VAPB (via MSP domain). Interacts with host EIF2AK2/PKR; this interaction leads to disruption of EIF2AK2 dimerization by NS5A and probably allows the virus to evade the innate immune response. Interacts (via N-terminus) with host PACSIN2 (via N-terminus); this interaction attenuates protein kinase C alpha-mediated phosphorylation of PACSIN2 by disrupting the interaction between PACSIN2 and PRKCA. Interacts (via N-terminus) with host SRC kinase (via SH2 domain). Interacts with most Src-family kinases. Interacts with host IFI27 and SKP2; promotes the ubiquitin-mediated proteasomal degradation of NS5A. Interacts with host GPS2. Interacts with host TNFRSF21; this interaction allows the modulation by the virus of JNK, p38 MAPK, STAT3, and Akt signaling pathways in a DR6-dependent manner. Interacts (via N-terminus) with host CIDEB (via N-terminus); this interaction seems to regulate the association of HCV particles with APOE. Interacts with host CHKA/Choline Kinase-alpha; CHKA bridges host PI4KA and NS5A and potentiates NS5A-stimulated PI4KA activity, which then facilitates the targeting of the ternary complex to the ER for viral replication. Interacts with host SPSB2 (via C-terminus); this interaction targets NS5A for ubiquitination and degradation. Interacts with host RAB18; this interaction may promote the association of NS5A and other replicase components with lipid droplets. Interacts (via region D2) with host PPIA/CYPA; the interaction stimulates RNA-binding ability of NS5A and is dependent on the peptidyl-prolyl cis-trans isomerase activity of PPIA/CYPA. Interacts with host TRIM14; this interaction induces the degradation of NS5A. Homooligomer. Interacts with non-structural protein 5A. Interacts with host VAPB. Interacts with host PRK2/PKN2. Interacts with host HNRNPA1 and SEPT6; these interactions facilitate viral replication. Part of the replication complex composed of NS2, NS3, NS4A, NS4B, NS5A and the RNA-directed RNA polymerase. Zn(2+) serves as cofactor. Mg(2+) is required as a cofactor. Specific enzymatic cleavages in vivo yield mature proteins. The structural proteins, core, E1, E2 and p7 are produced by proteolytic processing by host signal peptidases. The core protein precursor is synthesized as a 23 kDa, which is retained in the ER membrane through the hydrophobic signal peptide. Cleavage by the signal peptidase releases the 21 kDa mature core protein. The cleavage of the core protein precursor occurs between aminoacids 176 and 188 but the exact cleavage site is not known. Some degraded forms of the core protein appear as well during the course of infection. The other proteins (p7, NS2, NS3, NS4A, NS4B, NS5A and NS5B) are cleaved by the viral proteases. Autoprocessing between NS2 and NS3 is mediated by the NS2 cysteine protease catalytic domain and regulated by the NS3 N-terminal domain. In terms of processing, phosphorylated by host PKC and PKA. Post-translationally, ubiquitinated; mediated by UBE3A and leading to core protein subsequent proteasomal degradation. Highly N-glycosylated. In terms of processing, palmitoylation is required for NS2/3 autoprocessing and E2 recruitment to membranes. Post-translationally, palmitoylated. This modification may play a role in its polymerization or in protein-protein interactions. Phosphorylated on serines in a basal form termed p56. p58 is a hyperphosphorylated form of p56. p56 and p58 coexist in the cell in roughly equivalent amounts. Hyperphosphorylation is dependent on the presence of NS4A. Host CSNK1A1/CKI-alpha or RPS6KB1 kinases may be responsible for NS5A phosphorylation. In terms of processing, tyrosine phosphorylation is essential for the interaction with host SRC. Post-translationally, ubiquitinated. Ubiquitination, most probably at Lys-2350, mediated by host IFI27 and SKP2 leads to proteasomal degradation, restricting viral infection. Ubiquitination by host TRIM22 leads to interruption of viral replication. The N-terminus is phosphorylated by host PRK2/PKN2.

It localises to the host endoplasmic reticulum membrane. Its subcellular location is the host mitochondrion membrane. The protein localises to the virion. It is found in the host cytoplasm. The protein resides in the host nucleus. It localises to the host lipid droplet. Its subcellular location is the virion membrane. The protein localises to the host mitochondrion. It is found in the host cell membrane. The protein resides in the host perinuclear region. It catalyses the reaction Hydrolysis of four peptide bonds in the viral precursor polyprotein, commonly with Asp or Glu in the P6 position, Cys or Thr in P1 and Ser or Ala in P1'.. It carries out the reaction a ribonucleoside 5'-triphosphate + H2O = a ribonucleoside 5'-diphosphate + phosphate + H(+). The enzyme catalyses ATP + H2O = ADP + phosphate + H(+). The catalysed reaction is RNA(n) + a ribonucleoside 5'-triphosphate = RNA(n+1) + diphosphate. With respect to regulation, inhibited by the antiviral drug hexamethylene amiloride. Inhibition by amantadine appears to be genotype-dependent. Also inhibited by long-alkyl-chain iminosugar derivatives. Activity is up-regulated by PRK2/PKN2-mediated phosphorylation. Its function is as follows. Packages viral RNA to form a viral nucleocapsid, and promotes virion budding. Participates in the viral particle production as a result of its interaction with the non-structural protein 5A. Binds RNA and may function as a RNA chaperone to induce the RNA structural rearrangements taking place during virus replication. Modulates viral translation initiation by interacting with viral IRES and 40S ribosomal subunit. Affects various cell signaling pathways, host immunity and lipid metabolism. Prevents the establishment of cellular antiviral state by blocking the interferon-alpha/beta (IFN-alpha/beta) and IFN-gamma signaling pathways and by blocking the formation of phosphorylated STAT1 and promoting ubiquitin-mediated proteasome-dependent degradation of STAT1. Activates STAT3 leading to cellular transformation. Regulates the activity of cellular genes, including c-myc and c-fos. May repress the promoter of p53, and sequester CREB3 and SP110 isoform 3/Sp110b in the cytoplasm. Represses cell cycle negative regulating factor CDKN1A, thereby interrupting an important check point of normal cell cycle regulation. Targets transcription factors involved in the regulation of inflammatory responses and in the immune response: suppresses TNF-induced NF-kappa-B activation, and activates AP-1. Binds to dendritic cells (DCs) via C1QR1, resulting in down-regulation of T-lymphocytes proliferation. Alters lipid metabolism by interacting with hepatocellular proteins involved in lipid accumulation and storage. Induces up-regulation of FAS promoter activity, and thereby contributes to the increased triglyceride accumulation in hepatocytes (steatosis). Functionally, forms a heterodimer with envelope glycoprotein E2, which mediates virus attachment to the host cell, virion internalization through clathrin-dependent endocytosis and fusion with host membrane. Fusion with the host cell is most likely mediated by both E1 and E2, through conformational rearrangements of the heterodimer required for fusion rather than a classical class II fusion mechanism. E1/E2 heterodimer binds host apolipoproteins such as APOB and ApoE thereby forming a lipo-viro-particle (LVP). APOE associated to the LVP allows the initial virus attachment to cell surface receptors such as the heparan sulfate proteoglycans (HSPGs), syndecan-1 (SDC1), syndecan-1 (SDC2), the low-density lipoprotein receptor (LDLR) and scavenger receptor class B type I (SCARB1). The cholesterol transfer activity of SCARB1 allows E2 exposure and binding of E2 to SCARB1 and the tetraspanin CD81. E1/E2 heterodimer binding on CD81 activates the epithelial growth factor receptor (EGFR) signaling pathway. Diffusion of the complex E1-E2-EGFR-SCARB1-CD81 to the cell lateral membrane allows further interaction with Claudin 1 (CLDN1) and occludin (OCLN) to finally trigger HCV entry. Forms a heterodimer with envelope glycoprotein E1, which mediates virus attachment to the host cell, virion internalization through clathrin-dependent endocytosis and fusion with host membrane. Fusion with the host cell is most likely mediated by both E1 and E2, through conformational rearrangements of the heterodimer required for fusion rather than a classical class II fusion mechanism. The interaction between envelope glycoprotein E2 and host apolipoprotein E/APOE allows the proper assembly, maturation and infectivity of the viral particles. This interaction is probably promoted via the up-regulation of cellular autophagy by the virus. E1/E2 heterodimer binds host apolipoproteins such as APOB and APOE thereby forming a lipo-viro-particle (LVP). APOE associated to the LVP allows the initial virus attachment to cell surface receptors such as the heparan sulfate proteoglycans (HSPGs), syndecan-1 (SDC1), syndecan-1 (SDC2), the low-density lipoprotein receptor (LDLR) and scavenger receptor class B type I (SCARB1). The cholesterol transfer activity of SCARB1 allows E2 exposure and binding of E2 to SCARB1 and the tetraspanin CD81. E1/E2 heterodimer binding on CD81 activates the epithelial growth factor receptor (EGFR) signaling pathway. Diffusion of the complex E1-E2-EGFR-SCARB1-CD81 to the cell lateral membrane allows further interaction with Claudin 1 (CLDN1) and occludin (OCLN) to finally trigger HCV entry. Inhibits host EIF2AK2/PKR activation, preventing the establishment of an antiviral state. Viral ligand for CD209/DC-SIGN and CLEC4M/DC-SIGNR, which are respectively found on dendritic cells (DCs), and on liver sinusoidal endothelial cells and macrophage-like cells of lymph node sinuses. These interactions allow the capture of circulating HCV particles by these cells and subsequent facilitated transmission to permissive cells such as hepatocytes and lymphocyte subpopulations. The interaction between E2 and host amino acid transporter complex formed by SLC3A2 and SLC7A5/LAT1 may facilitate viral entry into host cell. In terms of biological role, ion channel protein that acts as a viroporin and plays an essential role in the assembly, envelopment and secretion of viral particles. Regulates the host cell secretory pathway, which induces the intracellular retention of viral glycoproteins and favors assembly of viral particles. Creates a pore in acidic organelles and releases Ca(2+) and H(+) in the cytoplasm of infected cells, leading to a productive viral infection. High levels of cytoplasmic Ca(2+) may trigger membrane trafficking and transport of viral ER-associated proteins to viroplasms, sites of viral genome replication. This ionic imbalance induces the assembly of the inflammasome complex, which triggers the maturation of pro-IL-1beta into IL-1beta through the action of caspase-1. Targets also host mitochondria and induces mitochondrial depolarization. In addition of its role as a viroporin, acts as a lipid raft adhesion factor. Its function is as follows. Cysteine protease required for the proteolytic auto-cleavage between the non-structural proteins NS2 and NS3. The N-terminus of NS3 is required for the function of NS2 protease (active region NS2-3). Promotes the initiation of viral particle assembly by mediating the interaction between structural and non-structural proteins. Functionally, displays three enzymatic activities: serine protease with a chymotrypsin-like fold, NTPase and RNA helicase. NS3 serine protease, in association with NS4A, is responsible for the cleavages of NS3-NS4A, NS4A-NS4B, NS4B-NS5A and NS5A-NS5B. The NS3/NS4A complex prevents phosphorylation of host IRF3, thus preventing the establishment of dsRNA induced antiviral state. The NS3/NS4A complex induces host amino acid transporter component SLC3A2, thus contributing to HCV propagation. NS3 RNA helicase binds to RNA and unwinds both dsDNA and dsRNA in the 3' to 5' direction, and likely resolves RNA complicated stable secondary structures in the template strand. Binds a single ATP and catalyzes the unzipping of a single base pair of dsRNA. Inhibits host antiviral proteins TBK1 and IRF3 thereby preventing the establishment of an antiviral state. Cleaves host MAVS/CARDIF thereby preventing the establishment of an antiviral state. Cleaves host TICAM1/TRIF, thereby disrupting TLR3 signaling and preventing the establishment of an antiviral state. Induces a specific membrane alteration that serves as a scaffold for the virus replication complex. This membrane alteration gives rise to the so-called ER-derived membranous web that contains the replication complex. NS4B self-interaction contributes to its function in membranous web formation. Promotes host TRIF protein degradation in a CASP8-dependent manner thereby inhibiting host TLR3-mediated interferon signaling. Disrupts the interaction between STING and TBK1 contributing to the inhibition of interferon signaling. In terms of biological role, phosphorylated protein that is indispensable for viral replication and assembly. Both hypo- and hyperphosphorylated states are required for the viral life cycle. The hyperphosphorylated form of NS5A is an inhibitor of viral replication. Involved in RNA-binding and especially in binding to the viral genome. Zinc is essential for RNA-binding. Participates in the viral particle production as a result of its interaction with the mature viral core protein. Its interaction with host VAPB may target the viral replication complex to vesicles. Down-regulates viral IRES translation initiation. Mediates interferon resistance, presumably by interacting with and inhibiting host EIF2AK2/PKR. Prevents BIN1-induced apoptosis. Acts as a transcriptional activator of some host genes important for viral replication when localized in the nucleus. Via the interaction with host PACSIN2, modulates lipid droplet formation in order to promote virion assembly. Modulates TNFRSF21/DR6 signaling pathway for viral propagation. Its function is as follows. RNA-dependent RNA polymerase that performs primer-template recognition and RNA synthesis during viral replication. Initiates RNA transcription/replication at a flavin adenine dinucleotide (FAD), resulting in a 5'- FAD cap on viral RNAs. In this way, recognition of viral 5' RNA by host pattern recognition receptors can be bypassed, thereby evading activation of antiviral pathways. This Hepatitis C virus genotype 2b (isolate JPUT971017) (HCV) protein is Genome polyprotein.